Consider the following 848-residue polypeptide: Adenylate cyclase (848 aa).

The catalytic stretch occupies residues M1–L535. The tract at residues K541–S848 is regulatory. H609 bears the Phosphohistidine; by CRR mark.

It belongs to the adenylyl cyclase class-1 family.

It is found in the cytoplasm. The enzyme catalyses ATP = 3',5'-cyclic AMP + diphosphate. Its activity is regulated as follows. The regulatory domain is involved in the regulation of cyclase activity by the carbon source. Activated by the PTS system, glucose-specific IIA component (CRR). Its function is as follows. Catalyzes the formation of the second messenger cAMP from ATP. Its transcript is probably degraded by endoribonuclease LS (rnlA), decreasing cAMP levels and the negative regulator Crp-cAMP, which then induces its own transcription again. This chain is Adenylate cyclase (cyaA), found in Escherichia coli (strain K12).